Reading from the N-terminus, the 120-residue chain is Large ribosomal subunit protein bL19 (120 aa).

It belongs to the bacterial ribosomal protein bL19 family.

Functionally, this protein is located at the 30S-50S ribosomal subunit interface and may play a role in the structure and function of the aminoacyl-tRNA binding site. This Synechococcus sp. (strain ATCC 27144 / PCC 6301 / SAUG 1402/1) (Anacystis nidulans) protein is Large ribosomal subunit protein bL19.